Consider the following 214-residue polypeptide: Large ribosomal subunit protein uL3 (214 aa).

Residues 134–161 are disordered; sequence THGNSLSHRAPGSIGQCQTPGRVMKGKK. Gln151 is subject to N5-methylglutamine.

The protein belongs to the universal ribosomal protein uL3 family. Part of the 50S ribosomal subunit. Forms a cluster with proteins L14 and L19. Methylated by PrmB.

Functionally, one of the primary rRNA binding proteins, it binds directly near the 3'-end of the 23S rRNA, where it nucleates assembly of the 50S subunit. The chain is Large ribosomal subunit protein uL3 from Teredinibacter turnerae (strain ATCC 39867 / T7901).